The following is a 786-amino-acid chain: Endonuclease MutS2 (786 aa).

ATP is bound at residue 335–342; it reads GPNTGGKT. The Smr domain occupies 711–786; it reads LDLRGERFEN…GLGVTVVELK (76 aa).

Belongs to the DNA mismatch repair MutS family. MutS2 subfamily. In terms of assembly, homodimer. Binds to stalled ribosomes, contacting rRNA.

Endonuclease that is involved in the suppression of homologous recombination and thus may have a key role in the control of bacterial genetic diversity. Functionally, acts as a ribosome collision sensor, splitting the ribosome into its 2 subunits. Detects stalled/collided 70S ribosomes which it binds and splits by an ATP-hydrolysis driven conformational change. Acts upstream of the ribosome quality control system (RQC), a ribosome-associated complex that mediates the extraction of incompletely synthesized nascent chains from stalled ribosomes and their subsequent degradation. Probably generates substrates for RQC. The polypeptide is Endonuclease MutS2 (Bacillus cereus (strain B4264)).